We begin with the raw amino-acid sequence, 570 residues long: Urease subunit alpha (570 aa).

The 440-residue stretch at 131-570 (GGMDSHIHFI…LPMAQRYFLF (440 aa)) folds into the Urease domain. The Ni(2+) site is built by H136, H138, and K219. K219 carries the post-translational modification N6-carboxylysine. Position 221 (H221) interacts with substrate. Ni(2+) contacts are provided by H248 and H274. H322 acts as the Proton donor in catalysis. D362 contributes to the Ni(2+) binding site.

Belongs to the metallo-dependent hydrolases superfamily. Urease alpha subunit family. As to quaternary structure, heterotrimer of UreA (gamma), UreB (beta) and UreC (alpha) subunits. Three heterotrimers associate to form the active enzyme. Requires Ni cation as cofactor. In terms of processing, carboxylation allows a single lysine to coordinate two nickel ions.

Its subcellular location is the cytoplasm. The catalysed reaction is urea + 2 H2O + H(+) = hydrogencarbonate + 2 NH4(+). It participates in nitrogen metabolism; urea degradation; CO(2) and NH(3) from urea (urease route): step 1/1. This chain is Urease subunit alpha, found in Rhizobium etli (strain ATCC 51251 / DSM 11541 / JCM 21823 / NBRC 15573 / CFN 42).